A 387-amino-acid chain; its full sequence is MKNVVIVDCLRTPMGRSKGGAFRHTRAEDLSAHLMKGILARNPQVNPSEIEDIYWGCVQQTLEQGFNVARNAALLAGLPIEIGAVTVNRLCGSSMQALHDGARAIMTGDAEICLIGGVEHMGHVPMNHGVDFHPGMSKHVAKAAGMMGLTAEMLGKLHGISREQQDEFAARSHARAHAATLEGRFKNEILPTEGHAADGTLFTLDHDEVIRPETTVEGLSQLRPVFDPANGTVTAGTSSALSDGASAMLIMSEEKANELGVTIRARIKGMAIAGCDPSIMGYGPVPATQKALKRAGLSIEDMDVIELNEAFAAQSLPCAKDLGLLDVMDEKVNLNGGAIALGHPLGCSGARISTTLINLMEAKDAKYGLATMCIGLGQGIATVFERP.

Catalysis depends on C91, which acts as the Acyl-thioester intermediate. Active-site proton acceptor residues include H343 and C373.

Belongs to the thiolase-like superfamily. Thiolase family. In terms of assembly, heterotetramer of two alpha chains (FadB) and two beta chains (FadA).

The protein localises to the cytoplasm. The enzyme catalyses an acyl-CoA + acetyl-CoA = a 3-oxoacyl-CoA + CoA. It participates in lipid metabolism; fatty acid beta-oxidation. Its function is as follows. Catalyzes the final step of fatty acid oxidation in which acetyl-CoA is released and the CoA ester of a fatty acid two carbons shorter is formed. The sequence is that of 3-ketoacyl-CoA thiolase from Vibrio vulnificus (strain YJ016).